Reading from the N-terminus, the 138-residue chain is uncharacterized protein (138 aa).

The disordered stretch occupies residues 1-27 (MEGELIENNGLDIYDTSETPKKRGRPA).

This is an uncharacterized protein from Escherichia coli (strain K12).